Here is an 87-residue protein sequence, read N- to C-terminus: Mitochondrial import protein 2 (87 aa).

Topologically, residues 1-53 (MADSEDTSVILQGIDTINSVEGLEEDGYLSDEDTSLSNELADAQRQWEESLQQ) are cytoplasmic. The chain crosses the membrane as a helical span at residues 54 to 71 (LNKLLNWVLLPLLGKYIG). The Mitochondrial intermembrane segment spans residues 72-87 (RRMAKTLWSRFIEHFV).

This sequence belongs to the MIM2 family. Component of the MIM complex containing at least MIM1 and MIM2. Interacts with MIM1; interaction is direct.

The protein resides in the mitochondrion outer membrane. Component of the MIM complex required for outer membrane protein import. Involved in import of the subset of proteins with multiple alpha-helical transmembrane segments, including UGO1, TOM20 and FZO1. The polypeptide is Mitochondrial import protein 2 (Saccharomyces cerevisiae (strain ATCC 204508 / S288c) (Baker's yeast)).